The following is a 31-amino-acid chain: 23S rRNA methylase leader peptide (31 aa).

This peptide is involved in the control mechanism of the synthesis of the erythromycin resistance protein. This is 23S rRNA methylase leader peptide (ermC) from Escherichia coli.